Here is a 298-residue protein sequence, read N- to C-terminus: Protein RKD2 (298 aa).

2 stretches are compositionally biased toward basic and acidic residues: residues methionine 1–lysine 10 and glutamate 81–threonine 102. 2 disordered regions span residues methionine 1 to aspartate 22 and serine 73 to histidine 112. Residues serine 121 to lysine 203 enclose the RWP-RK domain. The stretch at asparagine 188 to proline 222 forms a coiled coil. Residues asparagine 241–serine 279 are disordered. Residues serine 252–aspartate 269 are compositionally biased toward low complexity. Residues glutamate 270–serine 279 are compositionally biased toward acidic residues.

It localises to the nucleus. Putative transcription factor. In Arabidopsis thaliana (Mouse-ear cress), this protein is Protein RKD2 (RKD2).